A 104-amino-acid chain; its full sequence is Large ribosomal subunit protein uL24 (104 aa).

It belongs to the universal ribosomal protein uL24 family. As to quaternary structure, part of the 50S ribosomal subunit.

Its function is as follows. One of two assembly initiator proteins, it binds directly to the 5'-end of the 23S rRNA, where it nucleates assembly of the 50S subunit. One of the proteins that surrounds the polypeptide exit tunnel on the outside of the subunit. This Cronobacter sakazakii (strain ATCC BAA-894) (Enterobacter sakazakii) protein is Large ribosomal subunit protein uL24.